The following is a 616-amino-acid chain: DEAD-box ATP-dependent RNA helicase 53, mitochondrial (616 aa).

Residues 1–81 (MITTVLRRSL…DFRASMVSQA (81 aa)) constitute a mitochondrion transit peptide. The Q motif signature appears at 104–132 (LAISELGISPEIVKALSSKGIEKLFPIQK). A Helicase ATP-binding domain is found at 135 to 309 (LEPAMEGRDM…KKYLNNPLTV (175 aa)). Position 148-155 (148-155 (ARTGTGKT)) interacts with ATP. The short motif at 257–260 (DEAD) is the DEAD box element. The Helicase C-terminal domain maps to 338 to 482 (IIGPLVTEHA…ELPSIAVERG (145 aa)). Residues 489 to 616 (GIGSRSGGSF…FGSNDGKRSY (128 aa)) are disordered. Gly residues-rich tracts occupy residues 492–501 (SRSGGSFGGG) and 508–531 (SFGGRSGGGGYGGSSGGYGGGRSG). Composition is skewed to low complexity over residues 532 to 568 (GSSNRYSGDSDRSGFGSFGMRSPEGYGSDRSSQSGGR) and 578 to 587 (GSSNNRSSGF).

This sequence belongs to the DEAD box helicase family. DDX21/DDX50 subfamily.

It is found in the mitochondrion. It catalyses the reaction ATP + H2O = ADP + phosphate + H(+). In Arabidopsis thaliana (Mouse-ear cress), this protein is DEAD-box ATP-dependent RNA helicase 53, mitochondrial (RH53).